The following is a 403-amino-acid chain: CCA-adding enzyme (403 aa).

ATP is bound by residues Gly-32 and Arg-35. Residues Gly-32 and Arg-35 each coordinate CTP. Mg(2+) is bound by residues Asp-45 and Asp-47. 5 residues coordinate ATP: Arg-116, Asp-159, Arg-162, Arg-165, and Arg-168. The CTP site is built by Arg-116, Asp-159, Arg-162, Arg-165, and Arg-168.

This sequence belongs to the tRNA nucleotidyltransferase/poly(A) polymerase family. Bacterial CCA-adding enzyme type 3 subfamily. As to quaternary structure, homodimer. It depends on Mg(2+) as a cofactor.

It catalyses the reaction a tRNA precursor + 2 CTP + ATP = a tRNA with a 3' CCA end + 3 diphosphate. It carries out the reaction a tRNA with a 3' CCA end + 2 CTP + ATP = a tRNA with a 3' CCACCA end + 3 diphosphate. Its function is as follows. Catalyzes the addition and repair of the essential 3'-terminal CCA sequence in tRNAs without using a nucleic acid template. Adds these three nucleotides in the order of C, C, and A to the tRNA nucleotide-73, using CTP and ATP as substrates and producing inorganic pyrophosphate. tRNA 3'-terminal CCA addition is required both for tRNA processing and repair. Also involved in tRNA surveillance by mediating tandem CCA addition to generate a CCACCA at the 3' terminus of unstable tRNAs. While stable tRNAs receive only 3'-terminal CCA, unstable tRNAs are marked with CCACCA and rapidly degraded. The sequence is that of CCA-adding enzyme from Streptococcus uberis (strain ATCC BAA-854 / 0140J).